The sequence spans 210 residues: uncharacterized protein (210 aa).

Disordered stretches follow at residues 1–21 (MHRLFGRKPPTQPTASLTDAI) and 168–210 (EALQ…STAQ). Positions 21 to 175 (IDSLDKRSDS…ELEALQQESS (155 aa)) form a coiled coil. Residues 174 to 184 (SSWLGDQSTAE) show a composition bias toward polar residues.

This sequence belongs to the SNF7 family.

This is an uncharacterized protein from Schizosaccharomyces pombe (strain 972 / ATCC 24843) (Fission yeast).